Here is a 430-residue protein sequence, read N- to C-terminus: Histidine--tRNA ligase (430 aa).

It belongs to the class-II aminoacyl-tRNA synthetase family. As to quaternary structure, homodimer.

The protein resides in the cytoplasm. It carries out the reaction tRNA(His) + L-histidine + ATP = L-histidyl-tRNA(His) + AMP + diphosphate + H(+). The sequence is that of Histidine--tRNA ligase from Parasynechococcus marenigrum (strain WH8102).